The chain runs to 311 residues: Oxygen-dependent coproporphyrinogen-III oxidase (311 aa).

S93 is a binding site for substrate. The a divalent metal cation site is built by H97 and H107. The Proton donor role is filled by H107. Residue 109–111 (NVR) participates in substrate binding. 2 residues coordinate a divalent metal cation: H153 and H184. The interval 252-287 (YVEFNLVFDRGTLFGLQSGGRTESILMSLPPVVKWR) is important for dimerization. 270–272 (GGR) provides a ligand contact to substrate.

It belongs to the aerobic coproporphyrinogen-III oxidase family. In terms of assembly, homodimer. Requires a divalent metal cation as cofactor.

The protein localises to the cytoplasm. The enzyme catalyses coproporphyrinogen III + O2 + 2 H(+) = protoporphyrinogen IX + 2 CO2 + 2 H2O. It participates in porphyrin-containing compound metabolism; protoporphyrin-IX biosynthesis; protoporphyrinogen-IX from coproporphyrinogen-III (O2 route): step 1/1. In terms of biological role, involved in the heme biosynthesis. Catalyzes the aerobic oxidative decarboxylation of propionate groups of rings A and B of coproporphyrinogen-III to yield the vinyl groups in protoporphyrinogen-IX. The protein is Oxygen-dependent coproporphyrinogen-III oxidase of Aromatoleum aromaticum (strain DSM 19018 / LMG 30748 / EbN1) (Azoarcus sp. (strain EbN1)).